The following is a 414-amino-acid chain: Signal recognition particle receptor FtsY (414 aa).

Residues 216–223, 298–302, and 362–365 each bind GTP; these read GVNGVGKT, DTAGR, and TKLD.

Belongs to the GTP-binding SRP family. FtsY subfamily. As to quaternary structure, part of the signal recognition particle protein translocation system, which is composed of SRP and FtsY. SRP is a ribonucleoprotein composed of Ffh and a 4.5S RNA molecule.

The protein resides in the cell inner membrane. It is found in the cytoplasm. It catalyses the reaction GTP + H2O = GDP + phosphate + H(+). Its function is as follows. Involved in targeting and insertion of nascent membrane proteins into the cytoplasmic membrane. Acts as a receptor for the complex formed by the signal recognition particle (SRP) and the ribosome-nascent chain (RNC). Interaction with SRP-RNC leads to the transfer of the RNC complex to the Sec translocase for insertion into the membrane, the hydrolysis of GTP by both Ffh and FtsY, and the dissociation of the SRP-FtsY complex into the individual components. This is Signal recognition particle receptor FtsY from Haemophilus influenzae (strain ATCC 51907 / DSM 11121 / KW20 / Rd).